We begin with the raw amino-acid sequence, 351 residues long: Dihydroorotate dehydrogenase (quinone) (351 aa).

FMN is bound by residues 67–71 (AGFDK) and Thr91. Position 71 (Lys71) interacts with substrate. Position 116–120 (116–120 (NAMGF)) interacts with substrate. 2 residues coordinate FMN: Asn145 and Asn178. A substrate-binding site is contributed by Asn178. The active-site Nucleophile is the Ser181. Asn183 serves as a coordination point for substrate. FMN is bound by residues Lys214 and Thr242. 243-244 (NT) serves as a coordination point for substrate. Residues Gly262, Gly291, and 312–313 (YS) contribute to the FMN site.

This sequence belongs to the dihydroorotate dehydrogenase family. Type 2 subfamily. In terms of assembly, monomer. Requires FMN as cofactor.

Its subcellular location is the cell membrane. The catalysed reaction is (S)-dihydroorotate + a quinone = orotate + a quinol. It participates in pyrimidine metabolism; UMP biosynthesis via de novo pathway; orotate from (S)-dihydroorotate (quinone route): step 1/1. In terms of biological role, catalyzes the conversion of dihydroorotate to orotate with quinone as electron acceptor. This chain is Dihydroorotate dehydrogenase (quinone) (pyrD), found in Helicobacter pylori (strain ATCC 700392 / 26695) (Campylobacter pylori).